The primary structure comprises 258 residues: tRNA pseudouridine synthase A (258 aa).

Asp-53 (nucleophile) is an active-site residue. Tyr-111 provides a ligand contact to substrate.

Belongs to the tRNA pseudouridine synthase TruA family. As to quaternary structure, homodimer.

The enzyme catalyses uridine(38/39/40) in tRNA = pseudouridine(38/39/40) in tRNA. In terms of biological role, formation of pseudouridine at positions 38, 39 and 40 in the anticodon stem and loop of transfer RNAs. The sequence is that of tRNA pseudouridine synthase A from Streptococcus agalactiae serotype Ia (strain ATCC 27591 / A909 / CDC SS700).